Here is a 196-residue protein sequence, read N- to C-terminus: Glycerol-3-phosphate acyltransferase (196 aa).

The next 4 helical transmembrane spans lie at 4–24 (LTLL…AVVI), 80–100 (PFFL…PLYF), 114–134 (AMFP…LLVF), and 155–175 (AYWI…LILW).

Belongs to the PlsY family. As to quaternary structure, probably interacts with PlsX.

The protein resides in the cell inner membrane. The enzyme catalyses an acyl phosphate + sn-glycerol 3-phosphate = a 1-acyl-sn-glycero-3-phosphate + phosphate. It participates in lipid metabolism; phospholipid metabolism. Catalyzes the transfer of an acyl group from acyl-phosphate (acyl-PO(4)) to glycerol-3-phosphate (G3P) to form lysophosphatidic acid (LPA). This enzyme utilizes acyl-phosphate as fatty acyl donor, but not acyl-CoA or acyl-ACP. This Idiomarina loihiensis (strain ATCC BAA-735 / DSM 15497 / L2-TR) protein is Glycerol-3-phosphate acyltransferase.